The primary structure comprises 773 residues: Angiomotin-like protein 2 (773 aa).

Disordered stretches follow at residues 41–157 (GGAG…HVRS), 169–238 (RNGA…SPHF), and 259–309 (QYQY…LAQM). 3 stretches are compositionally biased toward basic and acidic residues: residues 80-91 (QGGETHLAENRL), 100-112 (KGEE…EAKA), and 141-152 (RRQDEALRELRH). The segment at 101 to 302 (GEELPTYEEA…GPPGAQATSG (202 aa)) is required for interaction with CDH5. At tyrosine 107 the chain carries Phosphotyrosine; by FGFR1. The span at 177 to 190 (HMSSSHSFPQLARS) shows a compositional bias: polar residues. Residues 196–213 (PRGPPAEGPEPRGPPPQY) are compositionally biased toward pro residues. Positions 220 to 302 (QETAAVNDPR…GPPGAQATSG (83 aa)) are required for interaction with CDH1. A coiled-coil region spans residues 304–577 (AHLAQMESVL…KYLEERAMRQ (274 aa)). Glycyl lysine isopeptide (Lys-Gly) (interchain with G-Cter in ubiquitin) cross-links involve residues lysine 342 and lysine 403. 2 disordered regions span residues 589–611 (QRDT…NEGL) and 677–754 (WQGF…TTSL). Positions 701 to 710 (EEPPATPPLP) are enriched in pro residues. Polar residues predominate over residues 719 to 734 (DGSTQTDGPADSTSAC). Residues serine 753 and serine 756 each carry the phosphoserine modification. The PDZ-binding signature appears at 770-773 (EILI).

Belongs to the angiomotin family. As to quaternary structure, part of a complex composed of AMOTL2, MAGI1 and CDH5, within the complex AMOTL2 acts as a scaffold protein for the interaction of MAGI1 with CDH5. The complex is required for coupling actin fibers to cell junctions in endothelial cells. Within the complex AMOTL2 (via its N-terminus) interacts with CDH5. Interacts (via N-terminus) with MAGI1. Interacts (via N-terminus) with ACTB; the interaction facilitates binding of cell junction complexes to actin fibers in endothelial cells. Interacts with CDH1; the interaction may facilitate binding of radial actin fibers to cell junction complexes. Interacts with SRC. Interacts with YAP1; the interaction is required for ubiquitination of AMOTL2 and localization of YAP1 to tight junctions. Interacts with WWP1; the interaction facilitates WWP1 interaction with the Crumbs complex and subsequent WWP1 translocation to the plasma membrane. WWP1 interaction with the Crumbs complex promotes WWP1 monoubiquitination of AMOTL2 which subsequently activates the Hippo signaling pathway. When ubiquitinated interacts with LATS2 (via UBA domain); the interaction promotes LATS2 phosphorylation of YAP1. Interacts (via PPXY motif) with WWTR1/TAZ (via WW domain); the interaction promotes WWTR1/TAZ localization to the cytoplasm and thereby inhibition of its transcriptional properties. Interacts with PHLDB2; interaction may facilitate PHLDB2 localization to the myotube podosome cortex that surrounds the core. In terms of processing, monoubiquitinated at Lys-342 and Lys-403 by Crumbs complex-bound WWP1. De-ubiquitinated at Lys-342 and Lys-403 by USP9X; the interaction may be promoted by cell contact inhibition. Deubiquitination of AMOTL2 negatively regulates Hippo signaling activation. Phosphorylation at Tyr-107 is necessary for efficient binding to SRC and synergistically functioning with SRC to activate the downstream MAPK pathway.

The protein resides in the recycling endosome. Its subcellular location is the cytoplasm. It is found in the cell projection. The protein localises to the podosome. It localises to the cell junction. Its function is as follows. Regulates the translocation of phosphorylated SRC to peripheral cell-matrix adhesion sites. Required for proper architecture of actin filaments. Plays a role in coupling actin fibers to cell junctions in endothelial cells and is therefore required for correct endothelial cell morphology via facilitating transcellular transmission of mechanical force resulting in endothelial cell elongation. Required for the anchoring of radial actin fibers to CDH1 junction complexes at the cell membrane which facilitates organization of radial actin fiber structure and cellular response to contractile forces. This contributes to maintenance of cell area, size, shape, epithelial sheet organization and trophectoderm cell properties that facilitate blastocyst zona hatching. Inhibits the Wnt/beta-catenin signaling pathway, probably by recruiting CTNNB1 to recycling endosomes and hence preventing its translocation to the nucleus. Participates in angiogenesis. Activates the Hippo signaling pathway in response to cell contact inhibition via interaction with and ubiquitination by Crumbs complex-bound WWP1. Ubiquitinated AMOTL2 then interacts with LATS2 which in turn phosphorylates YAP1, excluding it from the nucleus and localizing it to the cytoplasm and tight junctions, therefore ultimately repressing YAP1-driven transcription of target genes. Acts to inhibit WWTR1/TAZ transcriptional coactivator activity via sequestering WWTR1/TAZ in the cytoplasm and at tight junctions. Regulates the size and protein composition of the podosome cortex and core at myofibril neuromuscular junctions. Selectively promotes FGF-induced MAPK activation through SRC. May play a role in the polarity, proliferation and migration of endothelial cells. The chain is Angiomotin-like protein 2 from Rattus norvegicus (Rat).